The primary structure comprises 374 residues: MLQTQELQINIGPQHPSTHGVFRMIVTVDGETIVDLKPVFGYLHRNHEQLAEVSTYIQSMPYTDRLDYFNSMANNHALALAVEKLAGISVPQRAEYIRVLMVELTRILNHASAVGFLLNDMGAWQTPLMFGMREREKILDLFEMASGARMMCNYFRFGGVWRDLPPEFIPQLKELMQGLPSFFDEFERLLKENEILLSRTINVGVLPKEVAVSYSVTGPVLRASGIPYDVRRAEPYSVYDELDFDIPIGSVGDVYDRFLIRIEEMRQSYRILQQVIERLPDTTGGHINPAMANIGKQKALRPPPGDAYARIESPKGELGFYLVSDGSERPYRYKVRAPSFINLTPLGDMCRGHKVADVVVILGSIDIVMGEVDK.

The protein belongs to the complex I 49 kDa subunit family. NDH-1 is composed of 14 different subunits. Subunits NuoB, C, D, E, F, and G constitute the peripheral sector of the complex.

The protein resides in the cell membrane. The enzyme catalyses a quinone + NADH + 5 H(+)(in) = a quinol + NAD(+) + 4 H(+)(out). In terms of biological role, NDH-1 shuttles electrons from NADH, via FMN and iron-sulfur (Fe-S) centers, to quinones in the respiratory chain. The immediate electron acceptor for the enzyme in this species is believed to be ubiquinone. Couples the redox reaction to proton translocation (for every two electrons transferred, four hydrogen ions are translocated across the cytoplasmic membrane), and thus conserves the redox energy in a proton gradient. This chain is NADH-quinone oxidoreductase subunit D 1, found in Roseiflexus sp. (strain RS-1).